A 78-amino-acid chain; its full sequence is Translational regulator CsrA (78 aa).

Belongs to the CsrA/RsmA family. Homodimer; the beta-strands of each monomer intercalate to form a hydrophobic core, while the alpha-helices form wings that extend away from the core.

It is found in the cytoplasm. In terms of biological role, a translational regulator that binds mRNA to regulate translation initiation and/or mRNA stability. Usually binds in the 5'-UTR at or near the Shine-Dalgarno sequence preventing ribosome-binding, thus repressing translation. Its main target seems to be the major flagellin gene, while its function is anatagonized by FliW. In Desulfotalea psychrophila (strain LSv54 / DSM 12343), this protein is Translational regulator CsrA.